Here is a 601-residue protein sequence, read N- to C-terminus: Ubiquilin-4 (601 aa).

The region spanning 13–87 (IRVTVKTPKD…VHLVIKTPQK (75 aa)) is the Ubiquitin-like domain. Residues Lys23 and Lys62 each participate in a glycyl lysine isopeptide (Lys-Gly) (interchain with G-Cter in SUMO2) cross-link. Positions 87 to 155 (KAQDPAAATA…GAGEGSPSAT (69 aa)) are disordered. A compositionally biased stretch (low complexity) spans 88 to 138 (AQDPAAATASSPSTPDPASAPSTTPASPATPAQPSTSGSASSDAGSGSRRS). 2 positions are modified to phosphoserine: Ser98 and Ser144. Residues 139-149 (SGGGPSPGAGE) are compositionally biased toward gly residues. STI1 domains lie at 192 to 229 (NPEM…QQLM) and 230 to 261 (ERNP…MQEM). Position 287 is a phosphothreonine (Thr287). Residues 301-366 (FGNNPFSSLA…QVHPTVSNPF (66 aa)) are disordered. Residues 307–318 (SSLAGNSDSSSS) show a composition bias toward low complexity. Residue Ser318 is modified to Phosphoserine; by ATM. Positions 329 to 340 (LPNPWSPSPPTS) are enriched in pro residues. The span at 344–354 (GSGGEGTGGSG) shows a compositional bias: gly residues. Over residues 357–366 (QVHPTVSNPF) the composition is skewed to polar residues. STI1 domains lie at 393-440 (NPQL…QEQL) and 444-476 (LPVF…QQGL). The interval 490 to 533 (LGSFGISRTPAPSAGSNAGSTPEAPTSSPATPATSSPTGASSAQ) is disordered. Residues 507–533 (AGSTPEAPTSSPATPATSSPTGASSAQ) show a composition bias toward low complexity. Residues 553–598 (QTPEVRFQQQLEQLNSMGFINREANLQALIATGGDINAAIERLLGS) enclose the UBA domain.

In terms of assembly, homooligomer. Binds signal sequences of proteins that are targeted to the endoplasmic reticulum. Interacts (via UBA domain) with GJA1 (not ubiquitinated) and with ubiquitin; both compete for the same binding site. Interacts (via UBA domain) with ubiquitin and with polyubiquitin chains. Interacts (via ubiquitin-like domain) with PSMD2 and PSMD4, regulatory subunits of the 26S proteasome. Interacts with ATXN1/SCA1; interaction with ATXN1 inhibits polyubiquitination of UBQLN4 and interferes with PSMD4 binding. Interacts with HERPUD1. Interacts (via ubiquitin-like domain) with UBQLN1 (via UBA domain). Interacts with UBQLN2. Interacts (via STI1 1 and 2 domains) with MAP1LC3A/B/C. Interacts with BAG6. Interacts with MRE11 (when ubiquitinated); interaction with ubiquitinated MRE11 leads to MRE11 removal from chromatin. Interacts with DESI1/POST; leading to nuclear export. Interacts with BCL2A1 and BCL2L10. (Microbial infection) Interacts with Mumps virus protein SH. Phosphorylated by ATM at Ser-318 in response to DNA damage, leading to localization in the nucleus and recruitment to sites of DNA damage. In terms of processing, ubiquitinated; this does not lead to proteasomal degradation. May undergo both 'Lys-48'- and 'Lys-63'-linked polyubiquitination. Highly expressed in pancreas, kidney, skeletal muscle, heart and throughout the brain, and at lower levels in placenta, lung and liver.

The protein resides in the nucleus. It is found in the cytoplasm. The protein localises to the chromosome. It localises to the endoplasmic reticulum. Its subcellular location is the perinuclear region. The protein resides in the cytoplasmic vesicle. It is found in the autophagosome. In terms of biological role, regulator of protein degradation that mediates the proteasomal targeting of misfolded, mislocalized or accumulated proteins. Acts by binding polyubiquitin chains of target proteins via its UBA domain and by interacting with subunits of the proteasome via its ubiquitin-like domain. Key regulator of DNA repair that represses homologous recombination repair: in response to DNA damage, recruited to sites of DNA damage following phosphorylation by ATM and acts by binding and removing ubiquitinated MRE11 from damaged chromatin, leading to MRE11 degradation by the proteasome. MRE11 degradation prevents homologous recombination repair, redirecting double-strand break repair toward non-homologous end joining (NHEJ). Specifically recognizes and binds mislocalized transmembrane-containing proteins and targets them to proteasomal degradation. Collaborates with DESI1/POST in the export of ubiquitinated proteins from the nucleus to the cytoplasm. Also plays a role in the regulation of the proteasomal degradation of non-ubiquitinated GJA1. Acts as an adapter protein that recruits UBQLN1 to the autophagy machinery. Mediates the association of UBQLN1 with autophagosomes and the autophagy-related protein LC3 (MAP1LC3A/B/C) and may assist in the maturation of autophagosomes to autolysosomes by mediating autophagosome-lysosome fusion. This is Ubiquilin-4 from Homo sapiens (Human).